Consider the following 268-residue polypeptide: Putative hydro-lyase ABAYE2440 (268 aa).

It belongs to the D-glutamate cyclase family.

The chain is Putative hydro-lyase ABAYE2440 from Acinetobacter baumannii (strain AYE).